Reading from the N-terminus, the 431-residue chain is E3 ubiquitin-protein ligase marc-3 (431 aa).

The RING-CH-type zinc-finger motif lies at 5–74; it reads NASLGPAVCR…EICKFAFKIK (70 aa). The Zn(2+) site is built by C13, C16, C38, C40, H48, C51, C64, and C67. 2 consecutive transmembrane segments (helical) span residues 98-118 and 157-177; these read PFIDFAFVLLILPFAFFGVFM and LFLFVALLLFSAFITLVVSAL. Disordered regions lie at residues 267–289 and 327–349; these read TSPDSNNTHHHDESRNEIPFGRR and SRATSTRRESGISPESSSRRDMR. Positions 273–282 are enriched in basic and acidic residues; the sequence is NTHHHDESRN.

It is found in the cell membrane. Its subcellular location is the endosome membrane. The enzyme catalyses S-ubiquitinyl-[E2 ubiquitin-conjugating enzyme]-L-cysteine + [acceptor protein]-L-lysine = [E2 ubiquitin-conjugating enzyme]-L-cysteine + N(6)-ubiquitinyl-[acceptor protein]-L-lysine.. Its pathway is protein modification; protein ubiquitination. Its function is as follows. E3 ubiquitin-protein ligase which positively regulates the fast polyspermy block during fertilization, preventing entry of more than one sperm into the oocyte. After fertilization, required in the zygote for the selective degradation of a subset of maternal membrane proteins including cav-1, chs-1 and rme-2, probably by mediating their K63-linked polyubiquitination. In Caenorhabditis elegans, this protein is E3 ubiquitin-protein ligase marc-3.